The following is a 756-amino-acid chain: Ent-kaurene synthase, chloroplastic (756 aa).

Mg(2+)-binding residues include Asp507 and Asp511. The DDXXD motif motif lies at 507–511 (DDFFD). The helical transmembrane segment at 606–622 (YVSFALGPIVLPCLYLV) threads the bilayer. Asn651, Thr655, and Glu659 together coordinate Mg(2+).

This sequence belongs to the terpene synthase family. It depends on Mg(2+) as a cofactor. In terms of tissue distribution, present in both leaves and flowers.

It localises to the plastid. Its subcellular location is the chloroplast membrane. It carries out the reaction ent-copalyl diphosphate = ent-kaur-16-ene + diphosphate. It functions in the pathway plant hormone biosynthesis; gibberellin biosynthesis. Its function is as follows. Involved in the biosynthesis of labdane-type diterpenoid including marrubiin and other labdane-related furanoid diterpenoids with potential applications as anti-diabetics, analgesics or vasorelaxants. Terpene synthase that produces ent-kaurene from ent-copalyl diphosphate (ent-CPP). In Marrubium vulgare (White horehound), this protein is Ent-kaurene synthase, chloroplastic.